A 473-amino-acid polypeptide reads, in one-letter code: Major myo-inositol transporter IolT (473 aa).

The next 12 membrane-spanning stretches (helical) occupy residues isoleucine 14–glycine 34, alanine 49–phenylalanine 69, isoleucine 83–valine 103, phenylalanine 111–methionine 131, leucine 146–methionine 166, valine 172–isoleucine 192, isoleucine 256–methionine 276, isoleucine 295–leucine 315, methionine 325–leucine 345, alanine 350–isoleucine 370, leucine 389–phenylalanine 409, and isoleucine 411–cysteine 431.

This sequence belongs to the major facilitator superfamily. Sugar transporter (TC 2.A.1.1) family.

The protein resides in the cell membrane. Its pathway is polyol metabolism; myo-inositol degradation into acetyl-CoA. Functionally, major myo-inositol uptake transporter. The chain is Major myo-inositol transporter IolT (iolT) from Bacillus subtilis (strain 168).